The following is a 273-amino-acid chain: Neuferricin (273 aa).

An N-terminal signal peptide occupies residues 1–22 (MLGYLAAAALCLAAVLLMRLDH). The 100-residue stretch at 44–143 (GRLMSKEELS…QNYITIGKLT (100 aa)) folds into the Cytochrome b5 heme-binding domain.

The protein belongs to the cytochrome b5 family. MAPR subfamily.

The protein resides in the secreted. Its function is as follows. Heme-binding protein which promotes neuronal but not astrocyte differentiation. The chain is Neuferricin (cyb5d2) from Xenopus tropicalis (Western clawed frog).